The sequence spans 132 residues: Small ribosomal subunit protein uS8 (132 aa).

The protein belongs to the universal ribosomal protein uS8 family. As to quaternary structure, part of the 30S ribosomal subunit. Contacts proteins S5 and S12.

In terms of biological role, one of the primary rRNA binding proteins, it binds directly to 16S rRNA central domain where it helps coordinate assembly of the platform of the 30S subunit. The chain is Small ribosomal subunit protein uS8 from Leptospira biflexa serovar Patoc (strain Patoc 1 / Ames).